Here is a 388-residue protein sequence, read N- to C-terminus: Chorismate synthase (388 aa).

The NADP(+) site is built by arginine 39 and arginine 45. Residues 130 to 132 (RSS), 251 to 252 (NA), glycine 296, 311 to 315 (KPIPT), and arginine 337 each bind FMN.

It belongs to the chorismate synthase family. In terms of assembly, homotetramer. FMNH2 serves as cofactor.

The enzyme catalyses 5-O-(1-carboxyvinyl)-3-phosphoshikimate = chorismate + phosphate. It participates in metabolic intermediate biosynthesis; chorismate biosynthesis; chorismate from D-erythrose 4-phosphate and phosphoenolpyruvate: step 7/7. Functionally, catalyzes the anti-1,4-elimination of the C-3 phosphate and the C-6 proR hydrogen from 5-enolpyruvylshikimate-3-phosphate (EPSP) to yield chorismate, which is the branch point compound that serves as the starting substrate for the three terminal pathways of aromatic amino acid biosynthesis. This reaction introduces a second double bond into the aromatic ring system. This Streptococcus pneumoniae serotype 2 (strain D39 / NCTC 7466) protein is Chorismate synthase.